A 276-amino-acid polypeptide reads, in one-letter code: Large ribosomal subunit protein uL2 (276 aa).

2 disordered regions span residues 14–58 and 221–276; these read RNAS…GGGH and TRGE…KNRK. The segment covering 16 to 27 has biased composition (polar residues); it reads ASVSDFSELTRS. Over residues 255-276 the composition is skewed to basic residues; sequence RRPKKASNKMIVRRRPSGKNRK.

This sequence belongs to the universal ribosomal protein uL2 family. Part of the 50S ribosomal subunit. Forms a bridge to the 30S subunit in the 70S ribosome.

Functionally, one of the primary rRNA binding proteins. Required for association of the 30S and 50S subunits to form the 70S ribosome, for tRNA binding and peptide bond formation. It has been suggested to have peptidyltransferase activity; this is somewhat controversial. Makes several contacts with the 16S rRNA in the 70S ribosome. The polypeptide is Large ribosomal subunit protein uL2 (Bifidobacterium longum subsp. infantis (strain ATCC 15697 / DSM 20088 / JCM 1222 / NCTC 11817 / S12)).